Consider the following 169-residue polypeptide: ATP synthase subunit b (169 aa).

A helical membrane pass occupies residues 12 to 32 (PSVGLIFWKTVAFLIFLYILY). Residues 69–107 (AENEEARREAEQKAQQILREARDSAEELREEEKAKTRRE) are disordered. Residues 87 to 107 (REARDSAEELREEEKAKTRRE) are compositionally biased toward basic and acidic residues.

It belongs to the ATPase B chain family. F-type ATPases have 2 components, F(1) - the catalytic core - and F(0) - the membrane proton channel. F(1) has five subunits: alpha(3), beta(3), gamma(1), delta(1), epsilon(1). F(0) has three main subunits: a(1), b(2) and c(10-14). The alpha and beta chains form an alternating ring which encloses part of the gamma chain. F(1) is attached to F(0) by a central stalk formed by the gamma and epsilon chains, while a peripheral stalk is formed by the delta and b chains.

It is found in the cell inner membrane. In terms of biological role, f(1)F(0) ATP synthase produces ATP from ADP in the presence of a proton or sodium gradient. F-type ATPases consist of two structural domains, F(1) containing the extramembraneous catalytic core and F(0) containing the membrane proton channel, linked together by a central stalk and a peripheral stalk. During catalysis, ATP synthesis in the catalytic domain of F(1) is coupled via a rotary mechanism of the central stalk subunits to proton translocation. Functionally, component of the F(0) channel, it forms part of the peripheral stalk, linking F(1) to F(0). This is ATP synthase subunit b from Salinibacter ruber (strain DSM 13855 / M31).